A 260-amino-acid polypeptide reads, in one-letter code: Ras-related protein Rab-26 (260 aa).

Residues 1–56 (MSRKKTPKSKGGSEPATSTLPAAAAATNGPRLAHPRTVRPGPEAPPNGPPQSIRPS) form a disordered region. GTP contacts are provided by serine 76, glycine 77, valine 78, glycine 79, lysine 80, threonine 81, cysteine 82, serine 99, and threonine 100. Threonine 81 is a binding site for Mg(2+). Short sequence motifs (switch) lie at residues 90–105 (GAFL…GIDF) and 123–140 (DTAG…YYRD). Mg(2+)-binding residues include threonine 100 and aspartate 123. Positions 126, 181, 182, 184, 212, and 213 each coordinate GTP. S-geranylgeranyl cysteine attachment occurs at residues cysteine 257 and cysteine 258.

It belongs to the small GTPase superfamily. Rab family. Interacts with ADRA2B. Interacts with RIMS1. The cofactor is Mg(2+). As to expression, detected in zymogenic cells in the stomach.

The protein localises to the cytoplasmic vesicle. Its subcellular location is the secretory vesicle membrane. The protein resides in the golgi apparatus membrane. It carries out the reaction GTP + H2O = GDP + phosphate + H(+). With respect to regulation, regulated by guanine nucleotide exchange factors (GEFs) which promote the exchange of bound GDP for free GTP. Regulated by GTPase activating proteins (GAPs) which increase the GTP hydrolysis activity. Inhibited by GDP dissociation inhibitors (GDIs). Its function is as follows. The small GTPases Rab are key regulators of intracellular membrane trafficking, from the formation of transport vesicles to their fusion with membranes. Rabs cycle between an inactive GDP-bound form and an active GTP-bound form that is able to recruit to membranes different set of downstream effectors directly responsible for vesicle formation, movement, tethering and fusion. RAB26 mediates transport of ADRA2A and ADRA2B from the Golgi to the cell membrane. Plays a role in the maturation of zymogenic granules and in pepsinogen secretion in the stomach. Plays a role in the secretion of amylase from acinar granules in the parotid gland. The polypeptide is Ras-related protein Rab-26 (Mus musculus (Mouse)).